The chain runs to 188 residues: Gag polyprotein (188 aa).

The segment covering 77–90 has biased composition (basic and acidic residues); sequence VGETTVQRDAKMAP. Residues 77–99 form a disordered region; it reads VGETTVQRDAKMAPEETATPKTV. The PPXY motif signature appears at 121–124; it reads PPPY. Residues 130 to 166 form a disordered region; that stretch reads YPSLAGVGEQQGQGGDTPRGAEQPRAEPGHAGLAPGP.

Post-translationally, specific enzymatic cleavages in vivo yield mature proteins.

Its subcellular location is the virion. In Galliformes (EV-2), this protein is Gag polyprotein (ev-2).